The chain runs to 79 residues: Acyl carrier protein (79 aa).

One can recognise a Carrier domain in the interval 2-77 (SDIAERVKKI…DAVKFLEKNS (76 aa)). Serine 37 carries the O-(pantetheine 4'-phosphoryl)serine modification.

This sequence belongs to the acyl carrier protein (ACP) family. Post-translationally, 4'-phosphopantetheine is transferred from CoA to a specific serine of apo-ACP by AcpS. This modification is essential for activity because fatty acids are bound in thioester linkage to the sulfhydryl of the prosthetic group.

The protein resides in the cytoplasm. The protein operates within lipid metabolism; fatty acid biosynthesis. Functionally, carrier of the growing fatty acid chain in fatty acid biosynthesis. The polypeptide is Acyl carrier protein (Methylobacterium radiotolerans (strain ATCC 27329 / DSM 1819 / JCM 2831 / NBRC 15690 / NCIMB 10815 / 0-1)).